The following is a 330-amino-acid chain: B-cell receptor CD22 (330 aa).

A signal peptide spans 1-17 (MHLLGPWLLLLEYLAFS). The Ig-like V-type domain maps to 18 to 136 (DSSKWAFEHP…MERIHLNVSE (119 aa)). Residues 18–330 (DSSKWAFEHP…VFLQVQYAPE (313 aa)) are Extracellular-facing. 3 cysteine pairs are disulfide-bonded: cysteine 37-cysteine 165, cysteine 42-cysteine 100, and cysteine 159-cysteine 217. N-linked (GlcNAc...) asparagine glycans are attached at residues asparagine 65, asparagine 99, and asparagine 110. N-acetylneuraminate is bound at residue arginine 118. 4 N-linked (GlcNAc...) asparagine glycosylation sites follow: asparagine 133, asparagine 162, asparagine 187, and asparagine 229. Ig-like C2-type domains follow at residues 141–233 (PHIQ…DTVQ) and 240–324 (PKLK…VFLQ). Cysteine 263 and cysteine 307 are oxidised to a cystine.

It belongs to the immunoglobulin superfamily. SIGLEC (sialic acid binding Ig-like lectin) family. As to quaternary structure, predominantly monomer of isoform CD22-beta. Also found as heterodimer of isoform CD22-beta and a shorter isoform. Interacts with PTPN6/SHP-1, LYN, SYK, PIK3R1/PIK3R2 and PLCG1 upon phosphorylation. Interacts with GRB2, INPP5D and SHC1 upon phosphorylation. May form a complex with INPP5D/SHIP, GRB2 and SHC1.

It is found in the cell membrane. In terms of biological role, most highly expressed siglec (sialic acid-binding immunoglobulin-like lectin) on B-cells that plays a role in various aspects of B-cell biology including differentiation, antigen presentation, and trafficking to bone marrow. Binds to alpha 2,6-linked sialic acid residues of surface molecules such as CD22 itself, CD45 and IgM in a cis configuration. Can also bind to ligands on other cells as an adhesion molecule in a trans configuration. Acts as an inhibitory coreceptor on the surface of B-cells and inhibits B-cell receptor induced signaling, characterized by inhibition of the calcium mobilization and cellular activation. Mechanistically, the immunoreceptor tyrosine-based inhibitory motif domain is phosphorylated by the Src kinase LYN, which in turn leads to the recruitment of the protein tyrosine phosphatase 1/PTPN6, leading to the negative regulation of BCR signaling. If this negative signaling from is of sufficient strength, apoptosis of the B-cell can be induced. This Pongo pygmaeus (Bornean orangutan) protein is B-cell receptor CD22.